Consider the following 207-residue polypeptide: MSSRSRSKTRESRALGIALTPKAARYMEKRPYAPGEHGRTKRKADSDYAVRLREKQRLRAQYGILEKQLRIAFEEARRTQGLTGENLVEILEMRLDALVLRAGFARTISQARQFVVHRHILVDGKLVDRPSFRVKPGQTIGVKARSEGTEPFQVAAAGGHVDVLPKTPAYLSVELDKLQARLERRPKRAEVPVTCEVQLVVEYYAAR.

Residues 20-45 form a disordered region; it reads TPKAARYMEKRPYAPGEHGRTKRKAD. Positions 93 to 158 constitute an S4 RNA-binding domain; sequence MRLDALVLRA…TEPFQVAAAG (66 aa).

Belongs to the universal ribosomal protein uS4 family. As to quaternary structure, part of the 30S ribosomal subunit. Contacts protein S5. The interaction surface between S4 and S5 is involved in control of translational fidelity.

One of the primary rRNA binding proteins, it binds directly to 16S rRNA where it nucleates assembly of the body of the 30S subunit. Its function is as follows. With S5 and S12 plays an important role in translational accuracy. This is Small ribosomal subunit protein uS4 from Leifsonia xyli subsp. xyli (strain CTCB07).